The sequence spans 291 residues: Phosphatidylserine decarboxylase proenzyme (291 aa).

Residues D93, H150, and S253 each act as charge relay system; for autoendoproteolytic cleavage activity in the active site. S253 (schiff-base intermediate with substrate; via pyruvic acid; for decarboxylase activity) is an active-site residue. Residue S253 is modified to Pyruvic acid (Ser); by autocatalysis.

The protein belongs to the phosphatidylserine decarboxylase family. PSD-B subfamily. Prokaryotic type I sub-subfamily. In terms of assembly, heterodimer of a large membrane-associated beta subunit and a small pyruvoyl-containing alpha subunit. Pyruvate serves as cofactor. In terms of processing, is synthesized initially as an inactive proenzyme. Formation of the active enzyme involves a self-maturation process in which the active site pyruvoyl group is generated from an internal serine residue via an autocatalytic post-translational modification. Two non-identical subunits are generated from the proenzyme in this reaction, and the pyruvate is formed at the N-terminus of the alpha chain, which is derived from the carboxyl end of the proenzyme. The autoendoproteolytic cleavage occurs by a canonical serine protease mechanism, in which the side chain hydroxyl group of the serine supplies its oxygen atom to form the C-terminus of the beta chain, while the remainder of the serine residue undergoes an oxidative deamination to produce ammonia and the pyruvoyl prosthetic group on the alpha chain. During this reaction, the Ser that is part of the protease active site of the proenzyme becomes the pyruvoyl prosthetic group, which constitutes an essential element of the active site of the mature decarboxylase.

The protein localises to the cell membrane. The enzyme catalyses a 1,2-diacyl-sn-glycero-3-phospho-L-serine + H(+) = a 1,2-diacyl-sn-glycero-3-phosphoethanolamine + CO2. It functions in the pathway phospholipid metabolism; phosphatidylethanolamine biosynthesis; phosphatidylethanolamine from CDP-diacylglycerol: step 2/2. Catalyzes the formation of phosphatidylethanolamine (PtdEtn) from phosphatidylserine (PtdSer). This is Phosphatidylserine decarboxylase proenzyme from Alcanivorax borkumensis (strain ATCC 700651 / DSM 11573 / NCIMB 13689 / SK2).